Consider the following 1026-residue polypeptide: Multidrug resistance protein MdtC (1026 aa).

Transmembrane regions (helical) follow at residues 15-35 (ILIA…LPVA), 333-353 (EVEE…FLFL), 360-380 (LIPA…MYLC), 387-407 (LSLM…IVVL), 431-451 (VGFT…PLLL), 463-483 (FAVT…TLTP), 528-548 (LVGV…IAIP), 853-873 (LILI…LYES), 897-917 (LFNA…IGIV), 953-973 (PIMM…LSGG), and 984-1004 (ITIV…TPVV).

The protein belongs to the resistance-nodulation-cell division (RND) (TC 2.A.6) family. MdtC subfamily. In terms of assembly, part of a tripartite efflux system composed of MdtA, MdtB and MdtC. MdtC forms a heteromultimer with MdtB.

It is found in the cell inner membrane. This Salmonella schwarzengrund (strain CVM19633) protein is Multidrug resistance protein MdtC.